A 503-amino-acid chain; its full sequence is MSVAANAELMDYDDVIARFDPVLGLEVHVELSTVTKMFCGCTTAFGAEPNTQVCPVCLGLPGSLPVLNQAAVESAIRIGLALNCEIVPWCRFARKNYFYPDMPKNYQISQYDEPIAINGYLEAPLDDGTTWRVDIERAHMEEDTGKLTHIGSETGRIHGATTSLIDYNRAGVPLIEIVTKPIVGAGERAPQIARAYVTALRDLLRALGVSDVRMDQGSMRCDANVSLKPIGTAEFGTRTETKNVNSLKSVEVAVRYEMQRQAAVLASGGRITQETRHFHEAGYTSPGRVKETAEDYRYFPEPDLEPVAPSRELVERLRLTIPELPWLSRKRIQQEWGVSDEVMRDLVNAGAVDLVIETVKHGAPSEQARAWWGNFLVQKANEANIGLDELNISPAQVAAVIALVDEGKLSNKLARQVVEGVLAGEGEPDQVMNARGLELVRDDSVTQAAVDEALAANPDVAEKIRGGKIAAAGAIVGAVMKATRGQADAARVRELVLAACGQG.

Belongs to the GatB/GatE family. GatB subfamily. In terms of assembly, heterotrimer of A, B and C subunits.

It catalyses the reaction L-glutamyl-tRNA(Gln) + L-glutamine + ATP + H2O = L-glutaminyl-tRNA(Gln) + L-glutamate + ADP + phosphate + H(+). The enzyme catalyses L-aspartyl-tRNA(Asn) + L-glutamine + ATP + H2O = L-asparaginyl-tRNA(Asn) + L-glutamate + ADP + phosphate + 2 H(+). Allows the formation of correctly charged Asn-tRNA(Asn) or Gln-tRNA(Gln) through the transamidation of misacylated Asp-tRNA(Asn) or Glu-tRNA(Gln) in organisms which lack either or both of asparaginyl-tRNA or glutaminyl-tRNA synthetases. The reaction takes place in the presence of glutamine and ATP through an activated phospho-Asp-tRNA(Asn) or phospho-Glu-tRNA(Gln). In Mycobacterium avium (strain 104), this protein is Aspartyl/glutamyl-tRNA(Asn/Gln) amidotransferase subunit B.